Here is a 379-residue protein sequence, read N- to C-terminus: Alpha-humulene synthase eupE (379 aa).

It belongs to the terpene synthase family. Alpha-humulene synthase eupE subfamily. The cofactor is Mg(2+).

The enzyme catalyses (2E,6E)-farnesyl diphosphate = alpha-humulene + diphosphate. It participates in secondary metabolite biosynthesis; terpenoid biosynthesis. Its function is as follows. Alpha-humulene synthase; part of the gene cluster that mediates the biosynthesis of eupenifeldin, a bistropolone meroterpenoid that acts as an antitumor agent. The first step of eupenifeldin biosynthesis is the biosynthesis of 3-methylorcinaldehyde performed by the non-reducing polyketide synthase eupA. Oxidative dearomatization of 3-methylorcinaldehyde likely catalyzed by the FAD-dependent monooxygenase eupB is followed by oxidative ring expansion by the 2-oxoglutarate-dependent dioxygenase eupC to provide the first tropolone metabolite, tropolone stipitaldehyde. In parallel, generation of sesquiterpene alpha-humulene from farnesylpyrophosphate (FPP) is catalyzed by the terpene cyclase eupE. The cytochrome P450 monooxygenase eupD then hydroxylates humulene to humulenol. The putative Diels-Alderase eupF probably catalyzes the formation of the tropolone-humulene skeleton by linking humulenol and the polyketide moiety. The short-chain dehydrogenase/reductase eupG and the flavin-dependent monooxygenase eupH are also essential for eupenifeldin biosynthesis and are likely the additional decorating enzymes of the tropolone-humulene skeleton to produce final eupenifeldin or derivatives. The protein is Alpha-humulene synthase eupE of Phoma sp.